The sequence spans 361 residues: 5-formaminoimidazole-4-carboxamide-1-(beta)-D-ribofuranosyl 5'-monophosphate synthetase (361 aa).

Residues histidine 27 and serine 94 each coordinate 5-amino-1-(5-phospho-beta-D-ribosyl)imidazole-4-carboxamide. In terms of domain architecture, ATP-grasp spans 116–348 (RAILRWEAER…MGQRIAKEIK (233 aa)). ATP is bound by residues 146-208 (PDEI…ANYC) and glutamate 230. Asparagine 258 provides a ligand contact to 5-amino-1-(5-phospho-beta-D-ribosyl)imidazole-4-carboxamide. Mg(2+)-binding residues include glutamine 297 and glutamate 310.

The protein belongs to the phosphohexose mutase family. Mg(2+) serves as cofactor. It depends on Mn(2+) as a cofactor.

The catalysed reaction is 5-amino-1-(5-phospho-beta-D-ribosyl)imidazole-4-carboxamide + formate + ATP = 5-formamido-1-(5-phospho-D-ribosyl)imidazole-4-carboxamide + ADP + phosphate. Its pathway is purine metabolism; IMP biosynthesis via de novo pathway; 5-formamido-1-(5-phospho-D-ribosyl)imidazole-4-carboxamide from 5-amino-1-(5-phospho-D-ribosyl)imidazole-4-carboxamide (formate route): step 1/1. Its function is as follows. Catalyzes the ATP- and formate-dependent formylation of 5-aminoimidazole-4-carboxamide-1-beta-d-ribofuranosyl 5'-monophosphate (AICAR) to 5-formaminoimidazole-4-carboxamide-1-beta-d-ribofuranosyl 5'-monophosphate (FAICAR) in the absence of folates. The polypeptide is 5-formaminoimidazole-4-carboxamide-1-(beta)-D-ribofuranosyl 5'-monophosphate synthetase (Methanococcus maripaludis (strain DSM 14266 / JCM 13030 / NBRC 101832 / S2 / LL)).